Consider the following 199-residue polypeptide: uncharacterized protein (199 aa).

3 helical membrane-spanning segments follow: residues 22–44 (VVVVGLYYGFLTTFSIGPSYLFL), 65–87 (TGFIAGQLMMFISIYYAPLHLAL), and 91–108 (HTITVLALPYLLFHFFFW).

This sequence belongs to the ycf1 family.

Its subcellular location is the mitochondrion membrane. This is an uncharacterized protein from Arabidopsis thaliana (Mouse-ear cress).